We begin with the raw amino-acid sequence, 131 residues long: Profilin-A (131 aa).

It belongs to the profilin family. Occurs in many kinds of cells as a complex with monomeric actin in a 1:1 ratio.

Its subcellular location is the cytoplasm. It is found in the cytoskeleton. In terms of biological role, binds to actin and affects the structure of the cytoskeleton. At high concentrations, profilin prevents the polymerization of actin, whereas it enhances it at low concentrations. By binding to PIP2, it inhibits the formation of IP3 and DG. May serve as a modulator in pollen germination and pollen tube growth. This Oryza sativa subsp. japonica (Rice) protein is Profilin-A.